The primary structure comprises 234 residues: Small ribosomal subunit protein uS3 (234 aa).

The KH type-2 domain occupies 39–109 (IRTLINKHYG…EVRIAIYEVK (71 aa)).

The protein belongs to the universal ribosomal protein uS3 family. Part of the 30S ribosomal subunit. Forms a tight complex with proteins S10 and S14.

Functionally, binds the lower part of the 30S subunit head. Binds mRNA in the 70S ribosome, positioning it for translation. The protein is Small ribosomal subunit protein uS3 of Coprothermobacter proteolyticus (strain ATCC 35245 / DSM 5265 / OCM 4 / BT).